The primary structure comprises 193 residues: Endoribonuclease YbeY (193 aa).

Zn(2+) contacts are provided by H109, H113, and H119. The disordered stretch occupies residues 143–193 (GAALREGRREGRAGEAKDRWTRSPTSISTPSRSGSTARGSRAKTSRAGSRT). Over residues 147 to 163 (REGRREGRAGEAKDRWT) the composition is skewed to basic and acidic residues. A compositionally biased stretch (low complexity) spans 164 to 181 (RSPTSISTPSRSGSTARG).

It belongs to the endoribonuclease YbeY family. Requires Zn(2+) as cofactor.

It is found in the cytoplasm. Functionally, single strand-specific metallo-endoribonuclease involved in late-stage 70S ribosome quality control and in maturation of the 3' terminus of the 16S rRNA. The protein is Endoribonuclease YbeY of Anaeromyxobacter dehalogenans (strain 2CP-C).